The following is a 428-amino-acid chain: MRVVILGSGVVGVASAYYLARAGHEVTVIDREAGPALDTSFANAGQISPGYAAPWAAPGVPLKAVKWMFEKHAPLAIRLDGTRFQLQWMWQMLRNCTTERYALNKGRMVRLAEYSRDCLQALRAETAIQYEGRTGGTLQVFRTQQQLDGAAKDIAVLREANVPFELLSSDELKKAEPALAAVSHKLTGGLRLPGDETGDCQLFTTRLAALAEQLGVKFRFNTRIDALAVAGGKIAGVQCGGEMVRADAYVVALGSYSTNLVASLVKIPVYPLKGYSITAPIVDAAKAPVSTVLDETYKIAITRFDDRIRVGGMAEIVGFDKRLRDARRGTLEMCVNDLFPGGGDTEKATFWTGLRPMTPDGTPIVGRTPVPNLFLNTGHGTLGWTMSCGSGQLLADLMSGKKPAIRADDLSVHRYLSETDGEHRPAYA.

Val-3–Tyr-17 is a binding site for FAD.

Belongs to the DadA oxidoreductase family. It depends on FAD as a cofactor.

It catalyses the reaction a D-alpha-amino acid + A + H2O = a 2-oxocarboxylate + AH2 + NH4(+). It participates in amino-acid degradation; D-alanine degradation; NH(3) and pyruvate from D-alanine: step 1/1. Functionally, oxidative deamination of D-amino acids. This chain is D-amino acid dehydrogenase, found in Burkholderia pseudomallei (strain K96243).